The primary structure comprises 142 residues: Large ribosomal subunit protein uL13 (142 aa).

This sequence belongs to the universal ribosomal protein uL13 family. Part of the 50S ribosomal subunit.

This protein is one of the early assembly proteins of the 50S ribosomal subunit, although it is not seen to bind rRNA by itself. It is important during the early stages of 50S assembly. This Haemophilus influenzae (strain PittGG) protein is Large ribosomal subunit protein uL13.